A 581-amino-acid polypeptide reads, in one-letter code: Myoneurin (581 aa).

The BTB domain occupies 24–89 (CDCTIVIGEF…IYTGTLNLDS (66 aa)). The segment at 167–193 (PKQGALAKKSSQTKKKKKAFNSQKTGQ) is disordered. 2 consecutive short sequence motifs (nuclear localization signal) follow at residues 174–190 (KKSS…NSQK) and 256–261 (KRKRGK). Phosphoserine is present on S288. C2H2-type zinc fingers lie at residues 301-323 (PMCN…MRIH), 329-351 (YVCH…VRTH), 357-380 (YKCE…RMHH), 386-408 (YKCD…ARKH), 414-436 (YVCD…VRRH), 442-464 (YVCD…SRKH), and 470-493 (FICE…TKVH).

The protein belongs to the krueppel C2H2-type zinc-finger protein family.

Its subcellular location is the nucleus. The polypeptide is Myoneurin (MYNN) (Bos taurus (Bovine)).